The primary structure comprises 429 residues: Carboxypeptidase B (429 aa).

Residues 1-15 form the signal peptide; that stretch reads MKFLLVLALCAVVYA. A Peptidase M14 domain is found at 121 to 423; sequence NYQELEVIDE…EGIVVGARRA (303 aa). Zn(2+) contacts are provided by His-182 and Glu-185. Substrate is bound by residues 182–185, Arg-236, and 256–257; these read HARE and NR. A disulfide bridge connects residues Cys-250 and Cys-273. His-309 lines the Zn(2+) pocket. Substrate-binding positions include 310–311 and Tyr-365; that span reads SF. Glu-387 (proton donor/acceptor) is an active-site residue.

The protein belongs to the peptidase M14 family. Zn(2+) is required as a cofactor.

The protein localises to the secreted. It carries out the reaction Preferential release of a C-terminal lysine or arginine amino acid.. Highly resistant to inhibition by potato carboxypeptidase inhibitor (PCI). Moderately inhibited by leech carboxypeptidase inhibitor (LCI) and tick carboxypeptidase inhibitor (TCI). In terms of biological role, metalloprotease which cleaves a single amino acid from the C-terminal end of polypeptide chains. Shows a strong preference for peptides with a terminal lysine residue. This chain is Carboxypeptidase B, found in Helicoverpa zea (Corn earworm moth).